The sequence spans 882 residues: Serine/threonine-protein kinase greatwall (882 aa).

Position 1 is an N-acetylmethionine (methionine 1). The region spanning 35–838 (FTIVKPISRG…MKELKRHHLF (804 aa)) is the Protein kinase domain. ATP-binding positions include 41–49 (ISRGAFGKV) and lysine 62. Aspartate 156 functions as the Proton acceptor in the catalytic mechanism. A phosphothreonine mark is found at threonine 207 and threonine 222. 3 positions are modified to phosphoserine: serine 293, serine 371, and serine 454. Threonine 521 is modified (phosphothreonine). Serine 554, serine 558, serine 633, serine 660, and serine 671 each carry phosphoserine. The disordered stretch occupies residues 713–736 (TPNQVKSGTPYRTPKSVRRGAAPV). At threonine 725 the chain carries Phosphothreonine. Serine 728 is modified (phosphoserine). Phosphothreonine; by CDK1 is present on threonine 744. The AGC-kinase C-terminal domain maps to 839-882 (SDVDWENLQHQTMPFIPQPDDETDTSYFEARNNAQHLTISGFSL). Phosphoserine is present on residues serine 878 and serine 881.

It belongs to the protein kinase superfamily. AGC Ser/Thr protein kinase family. In terms of processing, phosphorylation at Thr-744 by CDK1 during M phase activates its kinase activity. Maximum phosphorylation occurs in prometaphase.

The protein localises to the cytoplasm. It is found in the cytoskeleton. It localises to the microtubule organizing center. Its subcellular location is the centrosome. The protein resides in the nucleus. The enzyme catalyses L-seryl-[protein] + ATP = O-phospho-L-seryl-[protein] + ADP + H(+). It catalyses the reaction L-threonyl-[protein] + ATP = O-phospho-L-threonyl-[protein] + ADP + H(+). Functionally, serine/threonine kinase that plays a key role in M phase by acting as a regulator of mitosis entry and maintenance. Acts by promoting the inactivation of protein phosphatase 2A (PP2A) during M phase: does not directly inhibit PP2A but acts by mediating phosphorylation and subsequent activation of ARPP19 and ENSA at 'Ser-62' and 'Ser-67', respectively. ARPP19 and ENSA are phosphatase inhibitors that specifically inhibit the PPP2R2D (PR55-delta) subunit of PP2A. Inactivation of PP2A during M phase is essential to keep cyclin-B1-CDK1 activity high. Following DNA damage, it is also involved in checkpoint recovery by being inhibited. The polypeptide is Serine/threonine-protein kinase greatwall (MASTL) (Ailuropoda melanoleuca (Giant panda)).